Consider the following 308-residue polypeptide: Isochorismatase domain-containing protein 1 (308 aa).

Belongs to the isochorismatase family.

The protein is Isochorismatase domain-containing protein 1 (isoc1) of Xenopus tropicalis (Western clawed frog).